A 546-amino-acid polypeptide reads, in one-letter code: Probable sucrose-6-phosphate hydrolase (546 aa).

Residues 105–108 (LLND), Gln124, 167–168 (FS), 228–229 (RD), and Glu283 each bind substrate. Asp108 is a catalytic residue.

The protein belongs to the glycosyl hydrolase 32 family.

Its subcellular location is the cytoplasm. It carries out the reaction Hydrolysis of terminal non-reducing beta-D-fructofuranoside residues in beta-D-fructofuranosides.. The protein operates within glycan biosynthesis; sucrose metabolism. In terms of biological role, enables the bacterium to metabolize sucrose as a sole carbon source. The polypeptide is Probable sucrose-6-phosphate hydrolase (cscA) (Vibrio cholerae serotype O1 (strain ATCC 39541 / Classical Ogawa 395 / O395)).